The following is an 804-amino-acid chain: Probable exo-1,4-beta-xylosidase xlnD (804 aa).

The signal sequence occupies residues 1–17 (MAVAALALLALLPQALG). N-linked (GlcNAc...) asparagine glycosylation is found at asparagine 20, asparagine 115, asparagine 139, asparagine 234, and asparagine 243. Aspartate 307 is a catalytic residue. Asparagine 349, asparagine 382, asparagine 404, asparagine 433, asparagine 444, asparagine 485, asparagine 489, asparagine 621, asparagine 652, asparagine 666, asparagine 688, and asparagine 710 each carry an N-linked (GlcNAc...) asparagine glycan.

It belongs to the glycosyl hydrolase 3 family.

It is found in the secreted. The enzyme catalyses Hydrolysis of (1-&gt;4)-beta-D-xylans, to remove successive D-xylose residues from the non-reducing termini.. It participates in glycan degradation; xylan degradation. In terms of biological role, xylan 1,4-beta-xylosidase involved in the hydrolysis of xylan, a major structural heterogeneous polysaccharide found in plant biomass representing the second most abundant polysaccharide in the biosphere, after cellulose. The chain is Probable exo-1,4-beta-xylosidase xlnD (xlnD) from Aspergillus japonicus.